We begin with the raw amino-acid sequence, 524 residues long: Tyrosine-protein kinase HCK (524 aa).

The interval 1–72 (MGGRSSCEDP…NNSNSMPPGF (72 aa)) is disordered. G2 carries the N-myristoyl glycine lipid modification. G3 carries S-palmitoyl cysteine lipidation. The span at 29 to 38 (FLRDGSKASK) shows a compositional bias: basic and acidic residues. The residue at position 50 (Y50) is a Phosphotyrosine; by autocatalysis. Residues 54–68 (PTSSSKLGPNNSNSM) show a composition bias toward polar residues. One can recognise an SH3 domain in the interval 76–136 (SEDTIVVALY…PSNYVARVNS (61 aa)). The region spanning 142–239 (WFFKGISRKD…GLCQKLSVPC (98 aa)) is the SH2 domain. T200 is subject to Phosphothreonine. The residue at position 207 (Y207) is a Phosphotyrosine. Residues 260 to 513 (LQMEKKLGAG…YIQSVLDDFY (254 aa)) enclose the Protein kinase domain. ATP is bound by residues 266-274 (LGAGQFGEV) and K288. D379 (proton acceptor) is an active-site residue. Y409 is subject to Phosphotyrosine; by autocatalysis. The residue at position 460 (S460) is a Phosphoserine. Y520 carries the phosphotyrosine modification.

Belongs to the protein kinase superfamily. Tyr protein kinase family. SRC subfamily. As to quaternary structure, interacts with ADAM15. Interacts with FASLG. Interacts with ARRB1 and ARRB2. Interacts with FCGR1A; the interaction may be indirect. Interacts with IL6ST. Interacts (via SH3 domain) with ELMO1. Interacts (via SH3 domain) with TP73. Interacts with YAP1. Interacts with ABL1 and ITGB1, and thereby recruits ABL1 to activated ITGB1. Interacts (via SH2 domain) with FLT3 (tyrosine phosphorylated). Interacts with CBL. Interacts with VAV1, WAS and RAPGEF1. Interacts (via SH3 domain) with WDCP. In terms of processing, phosphorylated on several tyrosine residues. Autophosphorylated. Becomes rapidly phosphorylated upon activation of the immunoglobulin receptors FCGR1A and FCGR2A. Phosphorylation at Tyr-409 increases kinase activity. Phosphorylation at Tyr-520 inhibits kinase activity. Kinase activity is not required for phosphorylation at Tyr-520, suggesting that this site may be a target of other kinases. Ubiquitinated by CBL, leading to its degradation via the proteasome. Post-translationally, isoform 2 palmitoylation at position 2 requires prior myristoylation. Palmitoylation at position 3 is required for caveolar localization of isoform 2. As to expression, expressed predominantly in cells of the myeloid and B-lymphoid lineages.

It is found in the cytoplasmic vesicle. The protein resides in the secretory vesicle. The protein localises to the cytoplasm. Its subcellular location is the cytosol. It localises to the membrane. It is found in the caveola. The protein resides in the lysosome. The protein localises to the cell projection. Its subcellular location is the podosome membrane. It localises to the cell membrane. It is found in the cell junction. The protein resides in the focal adhesion. The protein localises to the cytoskeleton. Its subcellular location is the golgi apparatus. It localises to the nucleus. The catalysed reaction is L-tyrosyl-[protein] + ATP = O-phospho-L-tyrosyl-[protein] + ADP + H(+). Its activity is regulated as follows. Subject to autoinhibition, mediated by intramolecular interactions involving the SH2 and SH3 domains. Kinase activity is also regulated by phosphorylation at regulatory tyrosine residues. Phosphorylation at Tyr-409 is required for optimal activity. Phosphorylation at Tyr-520 inhibits kinase activity. Inhibited by PP1. Its function is as follows. Non-receptor tyrosine-protein kinase found in hematopoietic cells that transmits signals from cell surface receptors and plays an important role in the regulation of innate immune responses, including neutrophil, monocyte, macrophage and mast cell functions, phagocytosis, cell survival and proliferation, cell adhesion and migration. Acts downstream of receptors that bind the Fc region of immunoglobulins, such as FCGR1A and FCGR2A, but also CSF3R, PLAUR, the receptors for IFNG, IL2, IL6 and IL8, and integrins, such as ITGB1 and ITGB2. During the phagocytic process, mediates mobilization of secretory lysosomes, degranulation, and activation of NADPH oxidase to bring about the respiratory burst. Plays a role in the release of inflammatory molecules. Promotes reorganization of the actin cytoskeleton and actin polymerization, formation of podosomes and cell protrusions. Inhibits TP73-mediated transcription activation and TP73-mediated apoptosis. Phosphorylates CBL in response to activation of immunoglobulin gamma Fc region receptors. Phosphorylates ADAM15, BCR, ELMO1, FCGR2A, GAB1, GAB2, RAPGEF1, STAT5B, TP73, VAV1 and WAS. This is Tyrosine-protein kinase HCK (Hck) from Mus musculus (Mouse).